An 84-amino-acid chain; its full sequence is Exodeoxyribonuclease 7 small subunit (84 aa).

It belongs to the XseB family. As to quaternary structure, heterooligomer composed of large and small subunits.

It is found in the cytoplasm. It catalyses the reaction Exonucleolytic cleavage in either 5'- to 3'- or 3'- to 5'-direction to yield nucleoside 5'-phosphates.. Bidirectionally degrades single-stranded DNA into large acid-insoluble oligonucleotides, which are then degraded further into small acid-soluble oligonucleotides. The sequence is that of Exodeoxyribonuclease 7 small subunit from Yersinia pseudotuberculosis serotype O:1b (strain IP 31758).